The primary structure comprises 612 residues: Cytoplasmic dynein 1 intermediate chain 2 (612 aa).

2 stretches are compositionally biased toward basic and acidic residues: residues 1–13 (MSDK…ELER) and 20–43 (QIRE…KKEA). Disordered regions lie at residues 1–117 (MSDK…MAKI) and 129–188 (TYTK…EEKQ). Residue Ser2 is modified to N-acetylserine. Ser51 carries the diphosphoserine modification. Residues Ser51 and Ser84 each carry the phosphoserine modification. Over residues 82 to 91 (PSSKSVSTPS) the composition is skewed to low complexity. Thr89 is subject to Phosphothreonine. A phosphoserine mark is found at Ser91, Ser95, and Ser98. Residues 164–188 (EKTLKKDEESDSKAPPHELTEEEKQ) are compositionally biased toward basic and acidic residues. 7 WD repeats span residues 251-300 (SKHR…TTPE), 304-344 (HCQS…RTPV), 353-394 (AHTH…HPQD), 403-443 (SKAV…AGIS), 448-493 (GHQG…PLYS), 496-536 (DNSD…EVPT), and 542-581 (EGNP…AVPR).

The protein belongs to the dynein intermediate chain family. In terms of assembly, homodimer. The cytoplasmic dynein 1 complex consists of two catalytic heavy chains (HCs) and a number of non-catalytic subunits presented by intermediate chains (ICs), light intermediate chains (LICs) and light chains (LCs); the composition seems to vary in respect to the IC, LIC and LC composition. The heavy chain homodimer serves as a scaffold for the probable homodimeric assembly of the respective non-catalytic subunits. The ICs and LICs bind directly to the HC dimer and the LCs assemble on the IC dimer. Interacts with DYNLT3. Interacts with DYNLT1. Interacts (dephosphorylated at Ser-84) with DCTN1. Interacts with BICD2. Interacts with SPEF2. Interacts with CFAP61. Post-translationally, the phosphorylation status of Ser-84 appears to be involved in dynactin-dependent target binding. Pyrophosphorylation by 5-diphosphoinositol pentakisphosphate (5-IP7) promotes interaction with DCTN1. Serine pyrophosphorylation is achieved by Mg(2+)-dependent, but enzyme independent transfer of a beta-phosphate from a inositol pyrophosphate to a pre-phosphorylated serine residue.

The protein localises to the cytoplasm. It is found in the cytoskeleton. In terms of biological role, acts as one of several non-catalytic accessory components of the cytoplasmic dynein 1 complex that are thought to be involved in linking dynein to cargos and to adapter proteins that regulate dynein function. Cytoplasmic dynein 1 acts as a motor for the intracellular retrograde motility of vesicles and organelles along microtubules. The intermediate chains mediate the binding of dynein to dynactin via its 150 kDa component (p150-glued) DCTN1. Involved in membrane-transport, such as Golgi apparatus, late endosomes and lysosomes. This is Cytoplasmic dynein 1 intermediate chain 2 (DYNC1I2) from Bos taurus (Bovine).